Here is a 605-residue protein sequence, read N- to C-terminus: Protein phosphatase 1D (605 aa).

The tract at residues 1-101 is interaction with CHEK1; it reads MAGLYSLGVS…CRRRSSVAFF (101 aa). The 368-residue stretch at 8–375 folds into the PPM-type phosphatase domain; sequence GVSVFSDQGG…DNTSAIVICI (368 aa). Residues 28-90 form a disordered region; the sequence is VVEPEPTAEE…DAGASPAPSR (63 aa). Phosphoserine is present on residues Ser40 and Ser85. 4 residues coordinate Mn(2+): Asp105, Gly106, Asp314, and Asp366. The segment at 516–591 is disordered; the sequence is STPGQMKAQE…RRLRGQKKIG (76 aa). Composition is skewed to polar residues over residues 530–544 and 555–577; these read PPTN…SNSG and LSRS…NSVK. The span at 579-588 shows a compositional bias: basic residues; the sequence is TMRRRLRGQK.

The protein belongs to the PP2C family. As to quaternary structure, interacts with CHEK1 and CHEK2; dephosphorylates them. Interacts with MAPK14. The cofactor is Mg(2+). Mn(2+) serves as cofactor. In terms of tissue distribution, expressed in fetal and adult brain. Also detected in fetal liver and skeletal muscle, but not in their adult counterparts.

Its subcellular location is the nucleus. The protein resides in the cytoplasm. It is found in the cytosol. It carries out the reaction O-phospho-L-seryl-[protein] + H2O = L-seryl-[protein] + phosphate. It catalyses the reaction O-phospho-L-threonyl-[protein] + H2O = L-threonyl-[protein] + phosphate. Its function is as follows. Involved in the negative regulation of p53 expression. Required for the relief of p53-dependent checkpoint mediated cell cycle arrest. Binds to and dephosphorylates 'Ser-15' of TP53 and 'Ser-345' of CHEK1 which contributes to the functional inactivation of these proteins. Mediates MAPK14 dephosphorylation and inactivation. Is also an important regulator of global heterochromatin silencing and critical in maintaining genome integrity. This is Protein phosphatase 1D (PPM1D) from Homo sapiens (Human).